A 150-amino-acid polypeptide reads, in one-letter code: Sec-independent protein translocase protein TatB (150 aa).

The chain crosses the membrane as a helical span at residues 1–21 (MFDLSWSEIALVGVVALIVIG). Residues 77 to 86 (KIDQAIDPDG) are compositionally biased toward basic and acidic residues. Positions 77-150 (KIDQAIDPDG…RTDGSLPPQD (74 aa)) are disordered. The segment covering 109 to 135 (AAPPSLPPQAPAQPVPPATGAAPPSPS) has biased composition (pro residues).

Belongs to the TatB family. In terms of assembly, the Tat system comprises two distinct complexes: a TatABC complex, containing multiple copies of TatA, TatB and TatC subunits, and a separate TatA complex, containing only TatA subunits. Substrates initially bind to the TatABC complex, which probably triggers association of the separate TatA complex to form the active translocon.

The protein resides in the cell inner membrane. In terms of biological role, part of the twin-arginine translocation (Tat) system that transports large folded proteins containing a characteristic twin-arginine motif in their signal peptide across membranes. Together with TatC, TatB is part of a receptor directly interacting with Tat signal peptides. TatB may form an oligomeric binding site that transiently accommodates folded Tat precursor proteins before their translocation. This is Sec-independent protein translocase protein TatB from Rhodospirillum rubrum (strain ATCC 11170 / ATH 1.1.1 / DSM 467 / LMG 4362 / NCIMB 8255 / S1).